Reading from the N-terminus, the 703-residue chain is uncharacterized protein (703 aa).

The first 23 residues, 1–23 (MKQIMIFLTSFMLLAMTGQTALA), serve as a signal peptide directing secretion. A helical transmembrane segment spans residues 673-693 (MYIGVLALIMVVAAVFIWIAV).

It localises to the cell membrane. This is an uncharacterized protein from Bacillus subtilis (strain 168).